A 481-amino-acid polypeptide reads, in one-letter code: 6-phosphogluconate dehydrogenase, decarboxylating (481 aa).

Residues 11–16, 34–36, 76–78, and N104 each bind NADP(+); these read GLAVMG, NRT, and VKA. Residues N104 and 130–132 each bind substrate; that span reads SGG. The active-site Proton acceptor is K184. 187–188 lines the substrate pocket; the sequence is HN. E191 functions as the Proton donor in the catalytic mechanism. Substrate is bound by residues Y192, K259, R286, R445, and H451.

Belongs to the 6-phosphogluconate dehydrogenase family. In terms of assembly, homodimer.

It catalyses the reaction 6-phospho-D-gluconate + NADP(+) = D-ribulose 5-phosphate + CO2 + NADPH. It participates in carbohydrate degradation; pentose phosphate pathway; D-ribulose 5-phosphate from D-glucose 6-phosphate (oxidative stage): step 3/3. Functionally, catalyzes the oxidative decarboxylation of 6-phosphogluconate to ribulose 5-phosphate and CO(2), with concomitant reduction of NADP to NADPH. The polypeptide is 6-phosphogluconate dehydrogenase, decarboxylating (Pgd) (Ceratitis capitata (Mediterranean fruit fly)).